A 204-amino-acid polypeptide reads, in one-letter code: CASP-like protein 1B2 (204 aa).

Topologically, residues 1-28 are cytoplasmic; it reads MASKGEEKPELVGSKQGIVSVTKAKHDQ. A helical transmembrane segment spans residues 29–49; sequence IVLVLRVVAFLATASATIVMG. Topologically, residues 50–80 are extracellular; that stretch reads LNQETKTLLVGTIGTTPIRATLKAKFQHTPA. Residues 81–101 traverse the membrane as a helical segment; the sequence is FVFFVVANGLASVYNLVMLGV. The Cytoplasmic portion of the chain corresponds to 102–114; sequence DVFGRKLDCKGLR. The helical transmembrane segment at 115–135 threads the bilayer; that stretch reads LVIISILDMVIVAVVAAGASS. Residues 136–168 are Extracellular-facing; sequence AAFMAELGKNGNSHAKWNKICDKFESFCHQGGG. The chain crosses the membrane as a helical span at residues 169–189; it reads ALIPSFIALLLLFLISAISII. Topologically, residues 190-204 are cytoplasmic; the sequence is TLHNQKLTSPHATTP.

This sequence belongs to the Casparian strip membrane proteins (CASP) family. As to quaternary structure, homodimer and heterodimers.

Its subcellular location is the cell membrane. The chain is CASP-like protein 1B2 from Vitis vinifera (Grape).